Here is a 261-residue protein sequence, read N- to C-terminus: Indole-3-glycerol phosphate synthase (261 aa).

This sequence belongs to the TrpC family.

It carries out the reaction 1-(2-carboxyphenylamino)-1-deoxy-D-ribulose 5-phosphate + H(+) = (1S,2R)-1-C-(indol-3-yl)glycerol 3-phosphate + CO2 + H2O. It functions in the pathway amino-acid biosynthesis; L-tryptophan biosynthesis; L-tryptophan from chorismate: step 4/5. This is Indole-3-glycerol phosphate synthase from Paraburkholderia phymatum (strain DSM 17167 / CIP 108236 / LMG 21445 / STM815) (Burkholderia phymatum).